Here is a 95-residue protein sequence, read N- to C-terminus: Alpha-defensin 20 (95 aa).

Residues 1 to 19 form the signal peptide; that stretch reads MKTLVLLSALVLLAFQVQA. A propeptide spanning residues 20 to 58 is cleaved from the precursor; the sequence is DPIQNTDEETNTEEQPGEEDQAVSVSFGDPEGSALHEKS. Positions 22 to 57 are disordered; sequence IQNTDEETNTEEQPGEEDQAVSVSFGDPEGSALHEK. Positions 25–40 are enriched in acidic residues; that stretch reads TDEETNTEEQPGEEDQ. 3 disulfide bridges follow: Cys-64/Cys-89, Cys-66/Cys-81, and Cys-71/Cys-88.

This sequence belongs to the alpha-defensin family.

It localises to the secreted. Its function is as follows. May have microbicidal activities. The protein is Alpha-defensin 20 (Defa20) of Mus musculus (Mouse).